The following is a 264-amino-acid chain: Short-chain dehydrogenase/reductase ucsE (264 aa).

Residues 13–32 (LVVVVGGTSGLGFAVAQAAV) traverse the membrane as a helical segment. NADP(+) contacts are provided by L23, S43, and D74. N-linked (GlcNAc...) asparagine glycosylation is present at N125. NADP(+) is bound by residues R130 and K139. S157 functions as the Proton donor in the catalytic mechanism. 2 residues coordinate NADP(+): V202 and T204.

This sequence belongs to the short-chain dehydrogenases/reductases (SDR) family. NADP(+) serves as cofactor.

The protein resides in the membrane. It functions in the pathway mycotoxin biosynthesis. In terms of biological role, short-chain dehydrogenase/reductase; part of the gene cluster that mediates the biosynthesis of UCS1025A, a member of the pyrrolizidinone family that acts as a strong telomerase inhibitor and displays potent antibacterial and antitumor properties. These compounds share a hemiaminal-containing pyrrolizidinone core fused with a gamma-lactone, giving a furopyrrolizidine that is connected to a decalin fragment. The polyketide synthase module (PKS) of the PKS-NRPS ucsA is responsible for the synthesis of the polyketide backbone via the condensation of an acetyl-CoA starter unit with 6 malonyl-CoA units. The downstream nonribosomal peptide synthetase (NRPS) module then amidates the carboxyl end of the polyketide with a 2S,3S-methylproline derived from L-isoleucine by the 2-oxoglutarate-dependent dioxygenase ucsF which converts L-isoleucine to (4S,5S)-4-methylpyrroline-5-carboxylate that is further converted to 2S,3S-methylproline by the pyrroline-5-carboxylate reductase ucsG. Reductive release of the completed aminoacyl polyketide from the assembly line can form the 3-pyrrolin-2-one structure via an intramolecular Knoevenagel reaction. Because ucsA lacks a designated enoylreductase (ER) domain, the required activity is provided the enoyl reductase ucsL. This keto acyclic precursor is the substrate of the Diels-Alderase ucsH, that catalyzes the Diels-Alder cycloaddition. Oxidation of the 3S-methyl group to a carboxylate by the cytochrome P450 monooxygenase ucsK allows an oxa-Michael cyclization that might involve the reductase/dehydrogenase ucsI and which furnishes the furopyrrolizidine. The oxidase ucsJ likely plays a critical role in stereoselective reduction of the C5-C6 double bond to afford the required R-configured carboxylate group. Further enolization and oxidation at C5 by an unidentified enzyme affords the last intermediate that can undergo oxa-Michael cyclization to yield UCS1025A. The chain is Short-chain dehydrogenase/reductase ucsE from Acremonium sp.